The sequence spans 249 residues: Small ribosomal subunit protein uS3 (249 aa).

Positions 23-94 (LNEFFTRELS…TVELYAEKVQ (72 aa)) constitute a KH type-2 domain. 4 positions are modified to phosphoserine: serine 32, serine 37, serine 106, and serine 141.

Belongs to the universal ribosomal protein uS3 family. As to quaternary structure, component of the small ribosomal subunit (SSU). Mature yeast ribosomes consist of a small (40S) and a large (60S) subunit. The 40S small subunit contains 1 molecule of ribosomal RNA (18S rRNA) and at least 33 different proteins. The large 60S subunit contains 3 rRNA molecules (25S, 5.8S and 5S rRNA) and at least 46 different proteins.

The protein resides in the cytoplasm. In terms of biological role, component of the ribosome, a large ribonucleoprotein complex responsible for the synthesis of proteins in the cell. The small ribosomal subunit (SSU) binds messenger RNAs (mRNAs) and translates the encoded message by selecting cognate aminoacyl-transfer RNA (tRNA) molecules. The large subunit (LSU) contains the ribosomal catalytic site termed the peptidyl transferase center (PTC), which catalyzes the formation of peptide bonds, thereby polymerizing the amino acids delivered by tRNAs into a polypeptide chain. The nascent polypeptides leave the ribosome through a tunnel in the LSU and interact with protein factors that function in enzymatic processing, targeting, and the membrane insertion of nascent chains at the exit of the ribosomal tunnel. This is Small ribosomal subunit protein uS3 (rps3) from Schizosaccharomyces pombe (strain 972 / ATCC 24843) (Fission yeast).